The primary structure comprises 899 residues: Bifunctional uridylyltransferase/uridylyl-removing enzyme (899 aa).

A uridylyltransferase region spans residues 1-342; sequence MPQVDPDLFD…PGDAAGRVEP (342 aa). The tract at residues 343-705 is uridylyl-removing; that stretch reads LNERFQVRDG…TTQREFEGAT (363 aa). Residues 461 to 583 enclose the HD domain; it reads VDAHTLNLIK…VRDQTYLDYL (123 aa). 2 ACT domains span residues 706 to 789 and 816 to 899; these read QIFI…IIQR and ILEI…RISI.

It belongs to the GlnD family. It depends on Mg(2+) as a cofactor.

It carries out the reaction [protein-PII]-L-tyrosine + UTP = [protein-PII]-uridylyl-L-tyrosine + diphosphate. The enzyme catalyses [protein-PII]-uridylyl-L-tyrosine + H2O = [protein-PII]-L-tyrosine + UMP + H(+). With respect to regulation, uridylyltransferase (UTase) activity is inhibited by glutamine, while glutamine activates uridylyl-removing (UR) activity. Functionally, modifies, by uridylylation and deuridylylation, the PII regulatory proteins (GlnB and homologs), in response to the nitrogen status of the cell that GlnD senses through the glutamine level. Under low glutamine levels, catalyzes the conversion of the PII proteins and UTP to PII-UMP and PPi, while under higher glutamine levels, GlnD hydrolyzes PII-UMP to PII and UMP (deuridylylation). Thus, controls uridylylation state and activity of the PII proteins, and plays an important role in the regulation of nitrogen fixation and metabolism. This chain is Bifunctional uridylyltransferase/uridylyl-removing enzyme, found in Azotobacter vinelandii (strain DJ / ATCC BAA-1303).